A 164-amino-acid chain; its full sequence is Putative anionic 4-hydroxy-benzoate permease (164 aa).

The disordered stretch occupies residues 1–30 (CGRRRGSLAWPDASSPSANPRPGAGAAESS). 3 helical membrane-spanning segments follow: residues 62–82 (LWVA…LMFM), 97–117 (GMAQ…VGGL), and 126–146 (PALT…MLAG).

This sequence belongs to the major facilitator superfamily. Cyanate porter (TC 2.A.1.17) family.

It is found in the cell membrane. May be involved in uptake of anionic 4-hydroxy-benzoate. The chain is Putative anionic 4-hydroxy-benzoate permease from Thauera aromatica.